The sequence spans 172 residues: 3-hydroxydecanoyl-[acyl-carrier-protein] dehydratase (172 aa).

Residue histidine 71 is part of the active site.

It belongs to the thioester dehydratase family. FabA subfamily. In terms of assembly, homodimer.

The protein resides in the cytoplasm. The catalysed reaction is a (3R)-hydroxyacyl-[ACP] = a (2E)-enoyl-[ACP] + H2O. The enzyme catalyses (3R)-hydroxydecanoyl-[ACP] = (2E)-decenoyl-[ACP] + H2O. It carries out the reaction (2E)-decenoyl-[ACP] = (3Z)-decenoyl-[ACP]. The protein operates within lipid metabolism; fatty acid biosynthesis. Its function is as follows. Necessary for the introduction of cis unsaturation into fatty acids. Catalyzes the dehydration of (3R)-3-hydroxydecanoyl-ACP to E-(2)-decenoyl-ACP and then its isomerization to Z-(3)-decenoyl-ACP. Can catalyze the dehydratase reaction for beta-hydroxyacyl-ACPs with saturated chain lengths up to 16:0, being most active on intermediate chain length. The chain is 3-hydroxydecanoyl-[acyl-carrier-protein] dehydratase from Maricaulis maris (strain MCS10) (Caulobacter maris).